The primary structure comprises 841 residues: Probable alpha-glucuronidase A (841 aa).

The signal sequence occupies residues 1–20; sequence MRGLNLFQLILALLLSMVAA. 15 N-linked (GlcNAc...) asparagine glycosylation sites follow: Asn-51, Asn-76, Asn-85, Asn-149, Asn-222, Asn-279, Asn-310, Asn-343, Asn-450, Asn-465, Asn-527, Asn-576, Asn-682, Asn-723, and Asn-732.

The protein belongs to the glycosyl hydrolase 67 family.

The protein localises to the secreted. The enzyme catalyses an alpha-D-glucuronoside + H2O = D-glucuronate + an alcohol. Functionally, alpha-glucuronidase involved in the hydrolysis of xylan, a major structural heterogeneous polysaccharide found in plant biomass representing the second most abundant polysaccharide in the biosphere, after cellulose. Releases 4-O-methylglucuronic acid from xylan. The chain is Probable alpha-glucuronidase A (aguA) from Aspergillus niger.